A 117-amino-acid chain; its full sequence is Transcription elongation factor SPT4 (117 aa).

The interaction with SUPT5H stretch occupies residues 1-40 (MSLETVPKDLRHLRACLLCSLVKTIDQFEYDGCDNCESYL). A C4-type zinc finger spans residues 16–36 (CLLCSLVKTIDQFEYDGCDNC).

The protein belongs to the SPT4 family. Interacts with SUPT5H to form the DSIF complex. DSIF interacts with RNA polymerase II and with the positive transcription elongation factor b complex (P-TEFb complex), which is composed of CDK9 and cyclin-T.

Its subcellular location is the nucleus. Its function is as follows. May function as a component of the DRB sensitivity-inducing factor complex (DSIF complex), which regulates transcription elongation by RNA polymerase II. Probably enhances transcriptional pausing at sites proximal to the promoter, which may facilitate the assembly of an elongation competent RNA polymerase II complex. Also acts to stimulate transcriptional elongation at low nucleotide concentrations. Regulation of transcriptional elongation by this protein is required for the expression of genes which control neuronal development. The chain is Transcription elongation factor SPT4 (supt4h1) from Danio rerio (Zebrafish).